We begin with the raw amino-acid sequence, 142 residues long: Small ribosomal subunit protein bS6 (142 aa).

Positions 110–133 (NKKPSHAKEKHEKTEHTHSHHTEE) are enriched in basic and acidic residues. The tract at residues 110–142 (NKKPSHAKEKHEKTEHTHSHHTEEAESVGSHSE) is disordered.

It belongs to the bacterial ribosomal protein bS6 family.

Functionally, binds together with bS18 to 16S ribosomal RNA. This is Small ribosomal subunit protein bS6 (rpsF) from Helicobacter pylori (strain ATCC 700392 / 26695) (Campylobacter pylori).